Consider the following 151-residue polypeptide: Large ribosomal subunit protein uL30 (151 aa).

The protein belongs to the universal ribosomal protein uL30 family. As to quaternary structure, part of the 50S ribosomal subunit.

The protein is Large ribosomal subunit protein uL30 of Methanothrix thermoacetophila (strain DSM 6194 / JCM 14653 / NBRC 101360 / PT) (Methanosaeta thermophila).